Reading from the N-terminus, the 365-residue chain is Putative glycosyltransferase C06E1.7 (365 aa).

Belongs to the glycosyltransferase 11 family.

The polypeptide is Putative glycosyltransferase C06E1.7 (Caenorhabditis elegans).